Reading from the N-terminus, the 505-residue chain is Glycerol kinase 2 (505 aa).

Residue threonine 17 participates in ADP binding. Residues threonine 17, threonine 18, and serine 19 each contribute to the ATP site. Threonine 17 provides a ligand contact to sn-glycerol 3-phosphate. An ADP-binding site is contributed by arginine 21. The sn-glycerol 3-phosphate site is built by arginine 87, glutamate 88, tyrosine 139, and aspartate 249. Glycerol contacts are provided by arginine 87, glutamate 88, tyrosine 139, aspartate 249, and glutamine 250. Threonine 271 and glycine 314 together coordinate ADP. Positions 271, 314, 318, and 415 each coordinate ATP. Glycine 415 and asparagine 419 together coordinate ADP.

This sequence belongs to the FGGY kinase family.

The catalysed reaction is glycerol + ATP = sn-glycerol 3-phosphate + ADP + H(+). It functions in the pathway polyol metabolism; glycerol degradation via glycerol kinase pathway; sn-glycerol 3-phosphate from glycerol: step 1/1. With respect to regulation, inhibited by fructose 1,6-bisphosphate (FBP). In terms of biological role, key enzyme in the regulation of glycerol uptake and metabolism. Catalyzes the phosphorylation of glycerol to yield sn-glycerol 3-phosphate. The sequence is that of Glycerol kinase 2 from Pseudomonas aeruginosa (strain ATCC 15692 / DSM 22644 / CIP 104116 / JCM 14847 / LMG 12228 / 1C / PRS 101 / PAO1).